The primary structure comprises 199 residues: ATP synthase subunit a (199 aa).

6 helical membrane-spanning segments follow: residues 2–22, 25–45, 53–73, 80–100, 143–163, and 164–184; these read TNVY…LFYF, SMLG…FSYT, VISV…YFMY, MIEF…LTFI, VNVL…ELYL, and GIFY…VFFI.

The protein belongs to the ATPase A chain family. As to quaternary structure, F-type ATPases have 2 components, CF(1) - the catalytic core - and CF(0) - the membrane proton channel. CF(1) has five subunits: alpha(3), beta(3), gamma(1), delta(1), epsilon(1). CF(0) has three main subunits: a, b and c.

The protein resides in the mitochondrion inner membrane. Mitochondrial membrane ATP synthase (F(1)F(0) ATP synthase or Complex V) produces ATP from ADP in the presence of a proton gradient across the membrane which is generated by electron transport complexes of the respiratory chain. F-type ATPases consist of two structural domains, F(1) - containing the extramembraneous catalytic core and F(0) - containing the membrane proton channel, linked together by a central stalk and a peripheral stalk. During catalysis, ATP synthesis in the catalytic domain of F(1) is coupled via a rotary mechanism of the central stalk subunits to proton translocation. Key component of the proton channel; it may play a direct role in the translocation of protons across the membrane. The chain is ATP synthase subunit a (ATP6) from Ascaris suum (Pig roundworm).